A 283-amino-acid chain; its full sequence is 4-diphosphocytidyl-2-C-methyl-D-erythritol kinase (283 aa).

Lys9 is an active-site residue. ATP is bound at residue 93 to 103 (PIAAGLAGGSS). Asp135 is an active-site residue.

The protein belongs to the GHMP kinase family. IspE subfamily.

The catalysed reaction is 4-CDP-2-C-methyl-D-erythritol + ATP = 4-CDP-2-C-methyl-D-erythritol 2-phosphate + ADP + H(+). The protein operates within isoprenoid biosynthesis; isopentenyl diphosphate biosynthesis via DXP pathway; isopentenyl diphosphate from 1-deoxy-D-xylulose 5-phosphate: step 3/6. Its function is as follows. Catalyzes the phosphorylation of the position 2 hydroxy group of 4-diphosphocytidyl-2C-methyl-D-erythritol. The sequence is that of 4-diphosphocytidyl-2-C-methyl-D-erythritol kinase from Macrococcus caseolyticus (strain JCSC5402) (Macrococcoides caseolyticum).